The primary structure comprises 334 residues: Ketol-acid reductoisomerase (NADP(+)) (334 aa).

The region spanning 1–181 is the KARI N-terminal Rossmann domain; the sequence is MTTVYYDQDV…GATRAGVIET (181 aa). NADP(+) is bound by residues 25–28, R48, S52, and 82–85; these read YGSQ and DEIQ. H107 is an active-site residue. G133 is an NADP(+) binding site. The KARI C-terminal knotted domain occupies 182–327; that stretch reads TFKEETETDL…RELREMMPFI (146 aa). Mg(2+)-binding residues include D190, E194, E226, and E230. Substrate is bound at residue S251.

Belongs to the ketol-acid reductoisomerase family. Requires Mg(2+) as cofactor.

The enzyme catalyses (2R)-2,3-dihydroxy-3-methylbutanoate + NADP(+) = (2S)-2-acetolactate + NADPH + H(+). It catalyses the reaction (2R,3R)-2,3-dihydroxy-3-methylpentanoate + NADP(+) = (S)-2-ethyl-2-hydroxy-3-oxobutanoate + NADPH + H(+). The protein operates within amino-acid biosynthesis; L-isoleucine biosynthesis; L-isoleucine from 2-oxobutanoate: step 2/4. It functions in the pathway amino-acid biosynthesis; L-valine biosynthesis; L-valine from pyruvate: step 2/4. In terms of biological role, involved in the biosynthesis of branched-chain amino acids (BCAA). Catalyzes an alkyl-migration followed by a ketol-acid reduction of (S)-2-acetolactate (S2AL) to yield (R)-2,3-dihydroxy-isovalerate. In the isomerase reaction, S2AL is rearranged via a Mg-dependent methyl migration to produce 3-hydroxy-3-methyl-2-ketobutyrate (HMKB). In the reductase reaction, this 2-ketoacid undergoes a metal-dependent reduction by NADPH to yield (R)-2,3-dihydroxy-isovalerate. This chain is Ketol-acid reductoisomerase (NADP(+)), found in Staphylococcus aureus (strain USA300).